The following is a 28-amino-acid chain: Ranatuerin-2LT (28 aa).

Cys23 and Cys28 are joined by a disulfide.

As to expression, expressed by the skin glands.

It is found in the secreted. Functionally, has antibacterial activity. The polypeptide is Ranatuerin-2LT (Rana latastei (Italian agile frog)).